We begin with the raw amino-acid sequence, 365 residues long: Galactoside alpha-(1,2)-fucosyltransferase 1 (365 aa).

Residues 1 to 8 (MWPLSHRH) are Cytoplasmic-facing. The helical; Signal-anchor for type II membrane protein transmembrane segment at 9 to 25 (LCLAFLLVCVLSAISFF) threads the bilayer. Residues 26–365 (LHIYQDSIRH…LSPLWTLAEP (340 aa)) are Lumenal-facing. 3 N-linked (GlcNAc...) asparagine glycosylation sites follow: Asn65, Asn301, and Asn327.

The protein belongs to the glycosyltransferase 11 family.

It localises to the golgi apparatus. The protein resides in the golgi stack membrane. The catalysed reaction is a beta-D-galactosyl-(1-&gt;4)-N-acetyl-beta-D-glucosaminyl derivative + GDP-beta-L-fucose = an alpha-L-Fuc-(1-&gt;2)-beta-D-Gal-(1-&gt;4)-beta-D-GlcNAc derivative + GDP + H(+). It catalyses the reaction a ganglioside GA1 + GDP-beta-L-fucose = a ganglioside Fuc-GA1 + GDP + H(+). The enzyme catalyses a beta-D-Gal-(1-&gt;3)-beta-D-GlcNAc-(1-&gt;3)-beta-D-Gal-(1-&gt;4)-beta-D-Glc-(1&lt;-&gt;1')-Cer(d18:1(4E)) + GDP-beta-L-fucose = alpha-L-fucosyl-(1-&gt;2)- beta-D-galactosyl-(1-&gt;3)-N-acetyl-beta-D-glucosaminyl-(1-&gt;3)-beta-D-galactosyl-(1-&gt;4)-beta-D-glucosyl-(1&lt;-&gt;1')-N-acylsphing-4-enine + GDP + H(+). It carries out the reaction a neolactoside nLc4Cer(d18:1(4E)) + GDP-beta-L-fucose = a neolactoside IV(2)-alpha-Fuc-nLc4Cer(d18:1(4E)) + GDP + H(+). The catalysed reaction is a ganglioside GM1 + GDP-beta-L-fucose = a ganglioside Fuc-GM1 + GDP + H(+). It catalyses the reaction beta-D-galactosyl-(1-&gt;3)-N-acetyl-D-galactosamine + GDP-beta-L-fucose = alpha-L-fucosyl-(1-&gt;2)-beta-D-galactosyl-(1-&gt;3)-N-acetyl-D-galactosamine + GDP + H(+). It functions in the pathway protein modification; protein glycosylation. Functionally, catalyzes the transfer of L-fucose, from a guanosine diphosphate-beta-L-fucose, to the terminal galactose residue of glycoconjugates through an alpha(1,2) linkage leading to H antigen synthesis that is an intermediate substrate in the synthesis of ABO blood group antigens. H antigen is essential for maturation of the glomerular layer of the main olfactory bulb, in cell migration and early cell-cell contacts during tumor associated angiogenesis. Preferentially fucosylates soluble lactose and to a lesser extent fucosylates glycolipids gangliosides GA1 and GM1a. The chain is Galactoside alpha-(1,2)-fucosyltransferase 1 from Mico humeralifer (Black and white tassel-ear marmoset).